The sequence spans 176 residues: MAICRILGIDPGSRITGYGIIDVRGTAIDYVDSGCIRLATQLMPQRLMTIHQGIFELVQQYHPQQFAIEAIFVHKNPNSALKLGQARGVAICAAVLSGLSINEYAAKSIKQAVVGKGGADKIQVQHMVKILLNRQGAIQSDAADALAVAITHAHHLQTLACQRPRQTDYWVNGNAS.

Catalysis depends on residues Asp-10, Glu-69, and Asp-141. Mg(2+) is bound by residues Asp-10, Glu-69, and Asp-141.

This sequence belongs to the RuvC family. In terms of assembly, homodimer which binds Holliday junction (HJ) DNA. The HJ becomes 2-fold symmetrical on binding to RuvC with unstacked arms; it has a different conformation from HJ DNA in complex with RuvA. In the full resolvosome a probable DNA-RuvA(4)-RuvB(12)-RuvC(2) complex forms which resolves the HJ. The cofactor is Mg(2+).

The protein resides in the cytoplasm. The catalysed reaction is Endonucleolytic cleavage at a junction such as a reciprocal single-stranded crossover between two homologous DNA duplexes (Holliday junction).. The RuvA-RuvB-RuvC complex processes Holliday junction (HJ) DNA during genetic recombination and DNA repair. Endonuclease that resolves HJ intermediates. Cleaves cruciform DNA by making single-stranded nicks across the HJ at symmetrical positions within the homologous arms, yielding a 5'-phosphate and a 3'-hydroxyl group; requires a central core of homology in the junction. The consensus cleavage sequence is 5'-(A/T)TT(C/G)-3'. Cleavage occurs on the 3'-side of the TT dinucleotide at the point of strand exchange. HJ branch migration catalyzed by RuvA-RuvB allows RuvC to scan DNA until it finds its consensus sequence, where it cleaves and resolves the cruciform DNA. This is Crossover junction endodeoxyribonuclease RuvC from Dichelobacter nodosus (strain VCS1703A).